The following is a 420-amino-acid chain: Dual-specificity RNA methyltransferase RlmN (420 aa).

Residue E115 is the Proton acceptor of the active site. Positions 121–388 (DADRGTLCVS…APIRTPRGRD (268 aa)) constitute a Radical SAM core domain. The cysteines at positions 128 and 393 are disulfide-linked. [4Fe-4S] cluster contacts are provided by C135, C139, and C142. Residues 217–218 (GE), S249, 271–273 (SLH), and N350 each bind S-adenosyl-L-methionine. C393 functions as the S-methylcysteine intermediate in the catalytic mechanism.

This sequence belongs to the radical SAM superfamily. RlmN family. Requires [4Fe-4S] cluster as cofactor.

Its subcellular location is the cytoplasm. The catalysed reaction is adenosine(2503) in 23S rRNA + 2 reduced [2Fe-2S]-[ferredoxin] + 2 S-adenosyl-L-methionine = 2-methyladenosine(2503) in 23S rRNA + 5'-deoxyadenosine + L-methionine + 2 oxidized [2Fe-2S]-[ferredoxin] + S-adenosyl-L-homocysteine. It catalyses the reaction adenosine(37) in tRNA + 2 reduced [2Fe-2S]-[ferredoxin] + 2 S-adenosyl-L-methionine = 2-methyladenosine(37) in tRNA + 5'-deoxyadenosine + L-methionine + 2 oxidized [2Fe-2S]-[ferredoxin] + S-adenosyl-L-homocysteine. Specifically methylates position 2 of adenine 2503 in 23S rRNA and position 2 of adenine 37 in tRNAs. m2A2503 modification seems to play a crucial role in the proofreading step occurring at the peptidyl transferase center and thus would serve to optimize ribosomal fidelity. The protein is Dual-specificity RNA methyltransferase RlmN of Sphingopyxis alaskensis (strain DSM 13593 / LMG 18877 / RB2256) (Sphingomonas alaskensis).